We begin with the raw amino-acid sequence, 493 residues long: Guanosine-5'-triphosphate,3'-diphosphate pyrophosphatase (493 aa).

This sequence belongs to the GppA/Ppx family. GppA subfamily.

The enzyme catalyses guanosine 3'-diphosphate 5'-triphosphate + H2O = guanosine 3',5'-bis(diphosphate) + phosphate + H(+). It participates in purine metabolism; ppGpp biosynthesis; ppGpp from GTP: step 2/2. Catalyzes the conversion of pppGpp to ppGpp. Guanosine pentaphosphate (pppGpp) is a cytoplasmic signaling molecule which together with ppGpp controls the 'stringent response', an adaptive process that allows bacteria to respond to amino acid starvation, resulting in the coordinated regulation of numerous cellular activities. The sequence is that of Guanosine-5'-triphosphate,3'-diphosphate pyrophosphatase from Salmonella choleraesuis (strain SC-B67).